The following is a 248-amino-acid chain: D-xylose 1-dehydrogenase (248 aa).

NAD(+) is bound by residues aspartate 42, aspartate 68, asparagine 91, tyrosine 156, lysine 160, valine 189, and threonine 191. The Proton acceptor role is filled by tyrosine 156.

The protein belongs to the short-chain dehydrogenases/reductases (SDR) family.

The catalysed reaction is D-xylose + NAD(+) = D-xylono-1,5-lactone + NADH + H(+). In terms of biological role, involved in the degradation of D-xylose. Catalyzes the initial reaction in the xylose utilization pathway by oxydizing D-xylose into D-xylonolactone. Shows some activity with L-arabinose and D-lyxose, but D-xylose is clearly the best substrate. Has no activity with D-ribose, D-glucose, D-galactose or D-mannose. The polypeptide is D-xylose 1-dehydrogenase (Caulobacter vibrioides (strain ATCC 19089 / CIP 103742 / CB 15) (Caulobacter crescentus)).